The chain runs to 477 residues: Pup--protein ligase (477 aa).

Glu-16 lines the Mg(2+) pocket. Arg-60 provides a ligand contact to ATP. Position 62 (Tyr-62) interacts with Mg(2+). The active-site Proton acceptor is Asp-64. A Mg(2+)-binding site is contributed by Glu-70. Residues Thr-73 and Trp-441 each coordinate ATP.

Belongs to the Pup ligase/Pup deamidase family. Pup-conjugating enzyme subfamily.

The catalysed reaction is ATP + [prokaryotic ubiquitin-like protein]-L-glutamate + [protein]-L-lysine = ADP + phosphate + N(6)-([prokaryotic ubiquitin-like protein]-gamma-L-glutamyl)-[protein]-L-lysine.. It functions in the pathway protein degradation; proteasomal Pup-dependent pathway. It participates in protein modification; protein pupylation. Functionally, catalyzes the covalent attachment of the prokaryotic ubiquitin-like protein modifier Pup to the proteasomal substrate proteins, thereby targeting them for proteasomal degradation. This tagging system is termed pupylation. The ligation reaction involves the side-chain carboxylate of the C-terminal glutamate of Pup and the side-chain amino group of a substrate lysine. This is Pup--protein ligase from Corynebacterium kroppenstedtii (strain DSM 44385 / JCM 11950 / CIP 105744 / CCUG 35717).